The sequence spans 216 residues: Kynurenine formamidase (216 aa).

Phe21 serves as a coordination point for substrate. The Zn(2+) site is built by His51, His55, and Asp57. His61 acts as the Proton donor/acceptor in catalysis. Zn(2+) is bound by residues His167 and Glu179.

This sequence belongs to the Cyclase 1 superfamily. KynB family. In terms of assembly, homodimer. Zn(2+) serves as cofactor.

It carries out the reaction N-formyl-L-kynurenine + H2O = L-kynurenine + formate + H(+). It functions in the pathway amino-acid degradation; L-tryptophan degradation via kynurenine pathway; L-kynurenine from L-tryptophan: step 2/2. Its function is as follows. Catalyzes the hydrolysis of N-formyl-L-kynurenine to L-kynurenine, the second step in the kynurenine pathway of tryptophan degradation. This chain is Kynurenine formamidase, found in Paracidovorax citrulli (strain AAC00-1) (Acidovorax citrulli).